We begin with the raw amino-acid sequence, 429 residues long: 3-phosphoshikimate 1-carboxyvinyltransferase (429 aa).

3 residues coordinate 3-phosphoshikimate: Lys-23, Ser-24, and Arg-28. Position 23 (Lys-23) interacts with phosphoenolpyruvate. Phosphoenolpyruvate-binding residues include Gly-95 and Arg-123. Residues Ser-168, Gln-170, Asp-316, and Lys-343 each coordinate 3-phosphoshikimate. Gln-170 is a binding site for phosphoenolpyruvate. Asp-316 (proton acceptor) is an active-site residue. Residues Arg-347 and Arg-389 each contribute to the phosphoenolpyruvate site.

It belongs to the EPSP synthase family. In terms of assembly, monomer.

It localises to the cytoplasm. It catalyses the reaction 3-phosphoshikimate + phosphoenolpyruvate = 5-O-(1-carboxyvinyl)-3-phosphoshikimate + phosphate. It functions in the pathway metabolic intermediate biosynthesis; chorismate biosynthesis; chorismate from D-erythrose 4-phosphate and phosphoenolpyruvate: step 6/7. Catalyzes the transfer of the enolpyruvyl moiety of phosphoenolpyruvate (PEP) to the 5-hydroxyl of shikimate-3-phosphate (S3P) to produce enolpyruvyl shikimate-3-phosphate and inorganic phosphate. The sequence is that of 3-phosphoshikimate 1-carboxyvinyltransferase from Bacillus cereus (strain B4264).